The primary structure comprises 369 residues: Leucine carboxyl methyltransferase 1 (369 aa).

S-adenosyl-L-methionine is bound by residues R84, G108, D132, 187–188, and E215; that span reads DL.

Belongs to the methyltransferase superfamily. LCMT family.

It catalyses the reaction [phosphatase 2A protein]-C-terminal L-leucine + S-adenosyl-L-methionine = [phosphatase 2A protein]-C-terminal L-leucine methyl ester + S-adenosyl-L-homocysteine. Functionally, methylates the carboxyl group of the C-terminal leucine residue of protein phosphatase 2A catalytic subunits to form alpha-leucine ester residues. The protein is Leucine carboxyl methyltransferase 1 (PPM1) of Debaryomyces hansenii (strain ATCC 36239 / CBS 767 / BCRC 21394 / JCM 1990 / NBRC 0083 / IGC 2968) (Yeast).